The sequence spans 263 residues: Pyrrolysine synthase (263 aa).

4 residues coordinate L-pyrrolysine: L8, V57, I64, and A107. K155, V156, D175, C210, P228, I230, and E249 together coordinate NAD(+).

It belongs to the PylD family.

It catalyses the reaction (3R)-3-methyl-D-ornithyl-N(6)-L-lysine + NAD(+) = L-pyrrolysine + NH4(+) + NADH + 2 H(+). The protein operates within amino-acid biosynthesis; L-pyrrolysine biosynthesis. Catalyzes the ultimate step of the pyrrolysine biosynthesis pathway by converting the isopeptide (3R)-3-methyl-D-ornithyl-N(6)-L-lysine to the 22nd proteinogenic amino acid. Is able to use surrogate substrates such as (3R)-D-ornithyl-N(6)-L-lysine in vitro. The chain is Pyrrolysine synthase from Methanosarcina barkeri (strain Fusaro / DSM 804).